The chain runs to 384 residues: Chorismate synthase (384 aa).

NADP(+)-binding residues include Arg-40 and Arg-46. FMN-binding positions include 128–130 (RAS), Gly-292, 307–311 (KPIPT), and Arg-333.

The protein belongs to the chorismate synthase family. In terms of assembly, homotetramer. FMNH2 is required as a cofactor.

It carries out the reaction 5-O-(1-carboxyvinyl)-3-phosphoshikimate = chorismate + phosphate. It functions in the pathway metabolic intermediate biosynthesis; chorismate biosynthesis; chorismate from D-erythrose 4-phosphate and phosphoenolpyruvate: step 7/7. Its function is as follows. Catalyzes the anti-1,4-elimination of the C-3 phosphate and the C-6 proR hydrogen from 5-enolpyruvylshikimate-3-phosphate (EPSP) to yield chorismate, which is the branch point compound that serves as the starting substrate for the three terminal pathways of aromatic amino acid biosynthesis. This reaction introduces a second double bond into the aromatic ring system. The sequence is that of Chorismate synthase from Carboxydothermus hydrogenoformans (strain ATCC BAA-161 / DSM 6008 / Z-2901).